A 360-amino-acid polypeptide reads, in one-letter code: A-type ATP synthase subunit C (360 aa).

The segment at 1-25 is disordered; it reads MRLLEKLWGQKPSRKSDKKKNGTSN.

This sequence belongs to the V-ATPase V0D/AC39 subunit family. Has multiple subunits with at least A(3), B(3), C, D, E, F, H, I and proteolipid K(x).

The protein resides in the cell membrane. Its function is as follows. Component of the A-type ATP synthase that produces ATP from ADP in the presence of a proton gradient across the membrane. The polypeptide is A-type ATP synthase subunit C (Methanosarcina barkeri (strain Fusaro / DSM 804)).